Consider the following 302-residue polypeptide: L-glutamate/L-aspartate-binding protein (302 aa).

Positions 1–23 are cleaved as a signal peptide; sequence MRIAPSLLSTAIVAALLSAPVVA.

The protein belongs to the bacterial solute-binding protein 3 family.

The protein resides in the periplasm. In terms of biological role, binds L-glutamate and L-aspartate. This Pseudomonas aeruginosa (strain ATCC 15692 / DSM 22644 / CIP 104116 / JCM 14847 / LMG 12228 / 1C / PRS 101 / PAO1) protein is L-glutamate/L-aspartate-binding protein.